The following is a 561-amino-acid chain: GPI mannosyltransferase 3 (561 aa).

Helical transmembrane passes span 3 to 25 (LIYV…QTYY), 64 to 84 (IAGL…LLVV), 110 to 130 (WALF…RTLA), 155 to 175 (LWPA…WLPL), 195 to 215 (FVLI…YWHG), 246 to 266 (FSVG…FGVM), 275 to 295 (YPVS…LSAV), and 328 to 348 (TMLW…AWYL). 2 N-linked (GlcNAc...) asparagine glycosylation sites follow: Asn398 and Asn456. Residues 525 to 546 (ENAFNRGPDSGQHEPDVHDHPP) are disordered. The span at 535–546 (GQHEPDVHDHPP) shows a compositional bias: basic and acidic residues.

The protein belongs to the glycosyltransferase 22 family. PIGB subfamily.

It localises to the endoplasmic reticulum membrane. The protein operates within glycolipid biosynthesis; glycosylphosphatidylinositol-anchor biosynthesis. Its function is as follows. Mannosyltransferase involved in glycosylphosphatidylinositol-anchor biosynthesis. Transfers the third alpha-1,2-mannose to Man2-GlcN-acyl-PI during GPI precursor assembly. The polypeptide is GPI mannosyltransferase 3 (Drosophila melanogaster (Fruit fly)).